The following is a 501-amino-acid chain: Eukaryotic translation initiation factor 3 subunit E (501 aa).

The 179-residue stretch at 245 to 423 folds into the PCI domain; the sequence is CDLFFYTPYL…ESIESTSTNV (179 aa). Phosphoserine occurs at positions 477 and 479.

The protein belongs to the eIF-3 subunit E family. Component of the eukaryotic translation initiation factor 3 (eIF-3) complex. The eIF-3 complex appears to include tif32/eif3a, SPAC25G10.08/eif3b, tif33/eif3c, SPBC4C3.07/eif3f, tif35/eif3g and sum1/eif3i. This set of common subunits may also associate exclusively with either moe1/eif3d and int6/eif3e, or with SPAC821.05/eif3h and SPAC1751.03/eif3m. The eIF-3 complex may also include SPAC3A12.13c/eif3j. Also interacts with the proteasome via rpn501/rpn502.

The protein localises to the cytoplasm. In terms of biological role, component of the eukaryotic translation initiation factor 3 (eIF-3) complex, which is involved in protein synthesis of a specialized repertoire of mRNAs and, together with other initiation factors, stimulates binding of mRNA and methionyl-tRNAi to the 40S ribosome. The eIF-3 complex specifically targets and initiates translation of a subset of mRNAs involved in cell proliferation (Potential). Required for maintaining the basal level of atf1 and for transcriptional activation of core environmental stress response genes (CESR genes) in response to histidine starvation. May positively regulate proteasome activity. Required for nuclear localization of the proteasome subunit rpn501/rpn502. This is Eukaryotic translation initiation factor 3 subunit E (int6) from Schizosaccharomyces pombe (strain 972 / ATCC 24843) (Fission yeast).